We begin with the raw amino-acid sequence, 98 residues long: Integration host factor subunit alpha (98 aa).

The tract at residues 49-71 (FGNFDLRDKNQRPGRNPKTGEDI) is disordered.

The protein belongs to the bacterial histone-like protein family. As to quaternary structure, heterodimer of an alpha and a beta chain.

Functionally, this protein is one of the two subunits of integration host factor, a specific DNA-binding protein that functions in genetic recombination as well as in transcriptional and translational control. This is Integration host factor subunit alpha from Shewanella amazonensis (strain ATCC BAA-1098 / SB2B).